Consider the following 779-residue polypeptide: Nucleus-vacuole junction protein 2 (779 aa).

The Cytoplasmic segment spans residues 1–2 (MF). The chain crosses the membrane as a helical; Signal-anchor for type II membrane protein span at residues 3-23 (FAFLITYLLGGVTFLPFILFI). Residues 24–779 (YLLTRPTHKS…VRPVPPIPKL (756 aa)) are Lumenal-facing. N233 carries N-linked (GlcNAc...) asparagine glycosylation. Positions 238–429 (SSPDTDWLNA…MPNMNDLAFF (192 aa)) constitute an SMP-LTD domain. Basic and acidic residues predominate over residues 454–465 (PAEKDAKAERKK). Disordered stretches follow at residues 454 to 539 (PAEK…NKSS) and 573 to 592 (LKTK…QTTL). The residue at position 473 (S473) is a Phosphoserine. Residues 484-494 (RSSNSNDTAPS) show a composition bias toward polar residues. N489 and N536 each carry an N-linked (GlcNAc...) asparagine glycan. N640 and N660 each carry an N-linked (GlcNAc...) asparagine glycan. Residues 654 to 779 (QNAIDFNVTN…VRPVPPIPKL (126 aa)) are disordered. Over residues 660 to 674 (NVTNTHSPSRSISSE) the composition is skewed to polar residues. Residues 675–691 (KSYKAAERGQQDKHNDV) show a composition bias toward basic and acidic residues. The segment covering 733-750 (GQPTLHPQGQLPIQNVEQ) has biased composition (polar residues).

Its subcellular location is the endoplasmic reticulum membrane. The protein localises to the nucleus membrane. Its function is as follows. During endoplasmic reticulum (ER) stress or when cellular ceramide levels increase, induces contacts between the ER and medial-Golgi complex to facilitate non-vesicular transport of ceramides from the ER to the Golgi complex where they are converted to complex sphingolipids, preventing toxic ceramide accumulation. In Schizosaccharomyces pombe (strain 972 / ATCC 24843) (Fission yeast), this protein is Nucleus-vacuole junction protein 2 (nvj2).